The chain runs to 466 residues: UDP-glycosyltransferase 79 (466 aa).

Histidine 27 functions as the Proton acceptor in the catalytic mechanism. Histidine 27 provides a ligand contact to UDP-alpha-D-glucose. Aspartate 120 acts as the Charge relay in catalysis. Positions 142, 291, 343, 344, 361, 364, 365, 366, 369, 385, and 386 each coordinate UDP-alpha-D-glucose. Threonine 291, phenylalanine 343, cysteine 344, and histidine 361 together coordinate UDP. UDP is bound by residues asparagine 365, serine 366, and glutamate 369.

It belongs to the UDP-glycosyltransferase family.

Its function is as follows. Involved in the detoxification of the Fusarium mycotoxin deoxynivalenol by the transfer of glucose from UDP-D-glucose to the hydroxyl group at C-3, forming deoxynivalenol-3-O-beta-D-glucoside. The chain is UDP-glycosyltransferase 79 from Oryza sativa subsp. japonica (Rice).